The sequence spans 205 residues: Recombination protein RecR (205 aa).

The C4-type zinc finger occupies 60–75 (CKVCHNISDTETCRIC). A Toprim domain is found at 83–178 (STICVVESIR…KLSVIARGIS (96 aa)).

Belongs to the RecR family.

Functionally, may play a role in DNA repair. It seems to be involved in an RecBC-independent recombinational process of DNA repair. It may act with RecF and RecO. This chain is Recombination protein RecR, found in Phocaeicola vulgatus (strain ATCC 8482 / DSM 1447 / JCM 5826 / CCUG 4940 / NBRC 14291 / NCTC 11154) (Bacteroides vulgatus).